A 538-amino-acid chain; its full sequence is CTP synthase (538 aa).

The segment at 1–267 (MDRAKFIFVT…LTPIARRFNL (267 aa)) is amidoligase domain. Serine 15 is a binding site for CTP. Serine 15 provides a ligand contact to UTP. Residues 16–21 (SLGKGI) and aspartate 73 each bind ATP. Mg(2+) is bound by residues aspartate 73 and glutamate 141. CTP contacts are provided by residues 148-150 (DME), 188-193 (KTKPTQ), and lysine 224. Residues 188 to 193 (KTKPTQ) and lysine 224 contribute to the UTP site. The region spanning 292–538 (KIGFVGKYLS…DFIKSALSKS (247 aa)) is the Glutamine amidotransferase type-1 domain. Glycine 351 contributes to the L-glutamine binding site. Cysteine 378 functions as the Nucleophile; for glutamine hydrolysis in the catalytic mechanism. L-glutamine contacts are provided by residues 379–382 (LGMQ), glutamate 402, and arginine 469. Active-site residues include histidine 513 and glutamate 515.

This sequence belongs to the CTP synthase family. In terms of assembly, homotetramer.

It catalyses the reaction UTP + L-glutamine + ATP + H2O = CTP + L-glutamate + ADP + phosphate + 2 H(+). It carries out the reaction L-glutamine + H2O = L-glutamate + NH4(+). The catalysed reaction is UTP + NH4(+) + ATP = CTP + ADP + phosphate + 2 H(+). Its pathway is pyrimidine metabolism; CTP biosynthesis via de novo pathway; CTP from UDP: step 2/2. With respect to regulation, allosterically activated by GTP, when glutamine is the substrate; GTP has no effect on the reaction when ammonia is the substrate. The allosteric effector GTP functions by stabilizing the protein conformation that binds the tetrahedral intermediate(s) formed during glutamine hydrolysis. Inhibited by the product CTP, via allosteric rather than competitive inhibition. Catalyzes the ATP-dependent amination of UTP to CTP with either L-glutamine or ammonia as the source of nitrogen. Regulates intracellular CTP levels through interactions with the four ribonucleotide triphosphates. The protein is CTP synthase of Helicobacter pylori (strain HPAG1).